A 443-amino-acid chain; its full sequence is Pyrrolysine--tRNA ligase (443 aa).

A disordered region spans residues 103–177 (VRKAMPKSVA…PAAPVPTSAP (75 aa)). The span at 131 to 177 (PAPATPVSAPAQAPAPSTGSASATSASAQRMANSAAAPAAPVPTSAP) shows a compositional bias: low complexity.

The protein belongs to the class-II aminoacyl-tRNA synthetase family.

Its subcellular location is the cytoplasm. The enzyme catalyses tRNA(Pyl) + L-pyrrolysine + ATP = L-pyrrolysyl-tRNA(Pyl) + AMP + diphosphate. In terms of biological role, catalyzes the attachment of pyrrolysine to tRNA(Pyl). Pyrrolysine is a lysine derivative encoded by the termination codon UAG. The polypeptide is Pyrrolysine--tRNA ligase (Methanosarcina acetivorans (strain ATCC 35395 / DSM 2834 / JCM 12185 / C2A)).